A 376-amino-acid chain; its full sequence is 1-deoxy-D-xylulose 5-phosphate reductoisomerase (376 aa).

Residues serine 10, glycine 11, serine 12, valine 13, glycine 36, lysine 37, asparagine 38, and asparagine 118 each coordinate NADPH. A 1-deoxy-D-xylulose 5-phosphate-binding site is contributed by lysine 119. Glutamate 120 is an NADPH binding site. Aspartate 144 contributes to the Mn(2+) binding site. 1-deoxy-D-xylulose 5-phosphate is bound by residues serine 145, glutamate 146, serine 170, and histidine 193. Glutamate 146 serves as a coordination point for Mn(2+). Glycine 199 is an NADPH binding site. 1-deoxy-D-xylulose 5-phosphate contacts are provided by serine 206, asparagine 211, lysine 212, and glutamate 215. Residue glutamate 215 coordinates Mn(2+).

This sequence belongs to the DXR family. Requires Mg(2+) as cofactor. The cofactor is Mn(2+).

It carries out the reaction 2-C-methyl-D-erythritol 4-phosphate + NADP(+) = 1-deoxy-D-xylulose 5-phosphate + NADPH + H(+). It functions in the pathway isoprenoid biosynthesis; isopentenyl diphosphate biosynthesis via DXP pathway; isopentenyl diphosphate from 1-deoxy-D-xylulose 5-phosphate: step 1/6. Its function is as follows. Catalyzes the NADPH-dependent rearrangement and reduction of 1-deoxy-D-xylulose-5-phosphate (DXP) to 2-C-methyl-D-erythritol 4-phosphate (MEP). The polypeptide is 1-deoxy-D-xylulose 5-phosphate reductoisomerase (Macrococcus caseolyticus (strain JCSC5402) (Macrococcoides caseolyticum)).